Here is a 337-residue protein sequence, read N- to C-terminus: Protein RETICULATA-RELATED 3, chloroplastic (337 aa).

Residues 1-59 (MAAMAAKLQLSAKSDQSSVRLPRVINLSRDPTTRVSFPRNGSVCSLHTNFSSPHLAKPC) constitute a chloroplast transit peptide. Positions 70 to 89 (NNGGGSGSGGGGGGFGGSGG) are enriched in gly residues. The tract at residues 70–96 (NNGGGSGSGGGGGGFGGSGGEASEESS) is disordered. 2 consecutive transmembrane segments (helical) span residues 151–171 (FVFS…YMLA) and 216–236 (VFAS…NGLI).

This sequence belongs to the RETICULATA family. In terms of tissue distribution, expressed in root meristem, root vasculature, distal region of young leaf primordia, leaf bundle sheath cells, hydathodes and pollen grains.

Its subcellular location is the plastid. The protein localises to the chloroplast membrane. May play a role in leaf development. Required for leaf mesophyll cell division in the early stages of leaf organogenesis. The protein is Protein RETICULATA-RELATED 3, chloroplastic of Arabidopsis thaliana (Mouse-ear cress).